A 171-amino-acid polypeptide reads, in one-letter code: Mitochondrial import inner membrane translocase subunit Tim17-A (171 aa).

Cys9 and Cys78 form a disulfide bridge. A run of 3 helical transmembrane segments spans residues 17–37 (CGGA…FKGF), 63–77 (GGSF…STID), and 113–133 (VGSA…GILL). Positions 147-171 (FAEDHSQLPSSQLPSSPFGDYRQYQ) are disordered. Residues 153–163 (QLPSSQLPSSP) are compositionally biased toward low complexity.

The protein belongs to the Tim17/Tim22/Tim23 family. Component of the TIM23 complex at least composed of TIMM23, TIMM17 (TIMM17A or TIMM17B) and TIMM50. The complex interacts with the TIMM44 component of the PAM complex and with DNAJC15. Degraded by YMEL1 downstream of the integrated stress response (ISR).

It is found in the mitochondrion inner membrane. Functionally, essential component of the TIM23 complex, a complex that mediates the translocation of transit peptide-containing proteins across the mitochondrial inner membrane. This is Mitochondrial import inner membrane translocase subunit Tim17-A (Timm17a) from Rattus norvegicus (Rat).